The chain runs to 401 residues: MTSYNRSVAWLTVCVLLALHIGGSHQQQQQCTTPTRLRGRCISIYECDSILDYFKQRILTWEEREFLRKSQCTGATSGRQPFVCCPGNGSKPVVAPATTVPAGTASTTPAGPAATAPSGDAALADQLVGGLLPNPKKNECGVSIGMRIYGGQNADIDEFPWLALLQYENRKGERKYSCGGSLINRRYVLTAAHCVIGEVERKEGKLVSVRLGEYNTKTEIDCVTEEQEEICADPPIDAGIESVIVHPGYQDMAHADDIALLRLAQSIEYTSFVQPVCLPLTDFRASKTGEVNFVTGFGRTLQESRSAVKQKLGIKVYDHARCQEKYATKNSSITTNQLCAGGEYAKDSCHGDSGGPLMKLQKVWYLEGIVSYGNRCGLEDWPGVYTHVPAYMAWVRSNIKE.

The signal sequence occupies residues 1–26; it reads MTSYNRSVAWLTVCVLLALHIGGSHQ. The region spanning 30 to 85 is the Clip domain; the sequence is QCTTPTRLRGRCISIYECDSILDYFKQRILTWEEREFLRKSQCTGATSGRQPFVCC. 3 disulfide bridges follow: Cys-31-Cys-84, Cys-41-Cys-72, and Cys-47-Cys-85. Residue Asn-88 is glycosylated (N-linked (GlcNAc...) asparagine). In terms of domain architecture, Peptidase S1 spans 148–400; the sequence is IYGGQNADID…YMAWVRSNIK (253 aa). An intrachain disulfide couples Cys-178 to Cys-194. Residues His-193 and Asp-257 each act as charge relay system in the active site. Cystine bridges form between Cys-322–Cys-339 and Cys-349–Cys-376. The N-linked (GlcNAc...) asparagine glycan is linked to Asn-330. Catalysis depends on Ser-353, which acts as the Charge relay system.

Belongs to the peptidase S1 family. CLIP subfamily. As to quaternary structure, forms a covalent heterodimer with SRPN2; the interaction inhibits CLIPB9 protease activity. Proteolytic cleavage is necessary for activation.

Its subcellular location is the secreted. Its activity is regulated as follows. Inhibited by serpin SRPN2. In terms of biological role, serine protease that functions in the melanization-mediated immune response. Cleaves and activates prophenoloxidase (PPO), which is required for the activation of the prophenoloxidase cascade probably following the recognition of pathogen-derived products. This chain is CLIP domain-containing serine protease B9, found in Anopheles gambiae (African malaria mosquito).